A 158-amino-acid polypeptide reads, in one-letter code: Osmosensory protein A (158 aa).

Phosphothreonine; by PknD is present on threonine 2. Residues 28 to 139 (AQIRAYLHHL…RSVHKALHDL (112 aa)) enclose the STAS domain.

Belongs to the anti-sigma-factor antagonist family. As to quaternary structure, interacts with Rv2638. Phosphorylation abolishes binding to Rv2638. Phosphorylated on Thr-2 by the serine/threonine-protein kinase PknD. Also phosphorylated to a lesser extent by PknB and PknE. Dephosphorylated by PstP.

With respect to regulation, regulated by PknD under osmotic stress. In terms of biological role, part of a signaling pathway that enables adaptation to osmotic stress through cell wall remodeling and virulence factor production. Unphosphorylated OprA forms a complex with the anti-anti-sigma-factor paralog Rv2638 that dissociates on OprA phosphorylation by PknD. Phosphorylation of OprA may stimulate the release of SigF from an inhibitory complex and enable the transcription of osmotically regulated genes, such as oprA and the ESX-1-associated virulence factor espA. This is Osmosensory protein A from Mycobacterium tuberculosis (strain ATCC 25618 / H37Rv).